The following is a 292-amino-acid chain: Homoserine kinase (292 aa).

84-94 (PLARGMGSSSA) serves as a coordination point for ATP.

It belongs to the GHMP kinase family. Homoserine kinase subfamily.

The protein resides in the cytoplasm. It catalyses the reaction L-homoserine + ATP = O-phospho-L-homoserine + ADP + H(+). Its pathway is amino-acid biosynthesis; L-threonine biosynthesis; L-threonine from L-aspartate: step 4/5. In terms of biological role, catalyzes the ATP-dependent phosphorylation of L-homoserine to L-homoserine phosphate. The chain is Homoserine kinase from Thermus thermophilus (strain ATCC BAA-163 / DSM 7039 / HB27).